A 171-amino-acid chain; its full sequence is Putative defense protein (171 aa).

An N-terminal signal peptide occupies residues 1–23 (MKVYACLCAAVVMLVMTSRVSEA). One can recognise a Reelin domain in the interval 24 to 171 (RSTGAPLSAC…VQSAPIKIVS (148 aa)). Cys-33 and Cys-110 are oxidised to a cystine. Asn-41 is a glycosylation site (N-linked (GlcNAc...) asparagine).

This sequence belongs to the insect defense protein family.

It is found in the secreted. Functionally, may have antimicrobial activity. The protein is Putative defense protein of Bombyx mori (Silk moth).